The following is a 533-amino-acid chain: Probable lipid II flippase MurJ (533 aa).

Helical transmembrane passes span 11–31 (LANIAGIVAIATLISKVFGLL), 39–61 (AFGVGTVVTAYAYAYVIPGFLFI), 96–116 (LVSGVLLGVTIILVLGAGIFI), 135–155 (LQIMAPMALLSGLIGIGFGTL), 166–186 (ISPLLSSITVILGLGVAVWQL), 196–216 (WLLGSLLLAGGTTAGAVLQWL), 253–273 (LSSGMLYINFATNLFFASFIP), 284–304 (FVALTPLGIISNMILVPFLPV), 330–350 (LTMFPLTAILVGLAIPIVQVI), 360–380 (AAAEVAPVLAAYGLGMFFYLG), 400–420 (VSLFNIFLNGLLDYLFYKPFG), 422–442 (VGIVMATVGVNLFSMTIFIWM), 452–472 (LGGWAMDLGKLVGVTAIASVA), and 493–513 (ILEVLTMSSIILVVFTVGVAL).

This sequence belongs to the MurJ/MviN family.

The protein resides in the cell inner membrane. It functions in the pathway cell wall biogenesis; peptidoglycan biosynthesis. Its function is as follows. Involved in peptidoglycan biosynthesis. Transports lipid-linked peptidoglycan precursors from the inner to the outer leaflet of the cytoplasmic membrane. This Synechocystis sp. (strain ATCC 27184 / PCC 6803 / Kazusa) protein is Probable lipid II flippase MurJ.